Consider the following 258-residue polypeptide: L-fucose dehydrogenase (258 aa).

NADP(+) contacts are provided by Ser-17, Ile-19, Arg-39, His-40, Glu-63, Leu-64, and Asn-90. The beta-L-fucose site is built by Asn-94, Ser-140, Lys-141, Gln-147, and Tyr-153. 2 residues coordinate NADP(+): Tyr-153 and Lys-157. The active-site Proton acceptor is the Tyr-153. Beta-L-fucose is bound by residues Ala-184 and Glu-185. Positions 186 and 188 each coordinate NADP(+).

This sequence belongs to the short-chain dehydrogenases/reductases (SDR) family. Homotetramer; dimer of dimers.

The enzyme catalyses beta-L-fucose + NADP(+) = L-fucono-1,5-lactone + NADPH + H(+). The catalysed reaction is D-arabinose + NADP(+) = D-arabinono-1,5-lactone + NADPH + H(+). Its pathway is carbohydrate degradation; L-fucose degradation. Its function is as follows. L-fucose dehydrogenase involved in an L-fucose degradation pathway. Catalyzes the oxidation of L-fucose to L-fucono-1,5-lactone. Can also act on D-arabinose, with lower catalytic efficiency, and has weak activity with L-galactose and 4-deoxy-L-fucose. Shows a preference for NADP(+) over NAD(+). This chain is L-fucose dehydrogenase, found in Burkholderia multivorans (strain ATCC 17616 / 249).